The chain runs to 390 residues: 8-demethyl-8-(2-methoxy-alpha-L-rhamnosyl)-tetracenomycin-C 3'-O-methyltransferase (390 aa).

S-adenosyl-L-methionine-binding positions include 202–208 (ELGIGGY), serine 217, aspartate 234, 252–253 (SQ), and aspartate 275. Aspartate 275 serves as a coordination point for Mg(2+). Histidine 278 acts as the Proton acceptor in catalysis. Mg(2+) is bound by residues glutamate 303 and aspartate 304.

Belongs to the methyltransferase OleY/MycE family. Mg(2+) serves as cofactor.

It carries out the reaction 8-demethyl-8-(2-O-methyl-alpha-L-rhamnosyl)-tetracenomycin C + S-adenosyl-L-methionine = 8-demethyl-8-(2,3-di-O-methyl-alpha-L-rhamnosyl)-tetracenomycin C + S-adenosyl-L-homocysteine + H(+). It functions in the pathway antibiotic biosynthesis. O-methyltransferase involved in the biosynthesis of the permethylated L-rhamnose moiety of elloramycin, an antitumor polyketide. Mediates the methylation of the hydroxy groups at the 3'-position after the sugar moiety has been attached to the aglycon. This is 8-demethyl-8-(2-methoxy-alpha-L-rhamnosyl)-tetracenomycin-C 3'-O-methyltransferase from Streptomyces olivaceus.